The primary structure comprises 1109 residues: Protein phosphatase 1 regulatory subunit 3A (1109 aa).

A phosphoserine; by GSK3 mark is found at Ser-40 and Ser-44. The residue at position 48 (Ser-48) is a Phosphoserine; by PKA and ISPK. Position 51 is a phosphoserine (Ser-51). The residue at position 58 (Thr-58) is a Phosphothreonine. The PP1-binding motif motif lies at 64-67 (RRVS). Ser-67 carries the phosphoserine; by PKA modification. The CBM21 domain occupies 124 to 232 (QLQVQKAMLE…NNNGTNYTLV (109 aa)). A compositionally biased stretch (basic and acidic residues) spans 236 to 251 (KEPEPEPGKPLEEAPS). Disordered regions lie at residues 236–278 (KEPE…NFEN), 340–424 (GKNT…SDGS), 436–455 (DDNA…CSFP), and 493–517 (YFKK…KEKR). 3 stretches are compositionally biased toward polar residues: residues 340-352 (GKNT…SNIP), 360-384 (KNQS…SAES), and 396-406 (YSSGNESSHQP). Phosphoserine is present on Ser-843. Disordered stretches follow at residues 945–985 (SATE…RKEK) and 1011–1048 (SREN…ETQD). A compositionally biased stretch (polar residues) spans 951–963 (YNCSPTRETQGQP). Composition is skewed to basic and acidic residues over residues 966–985 (KPEE…RKEK) and 1011–1034 (SREN…KEFE). Over residues 1035-1048 (SSASSSLPVQETQD) the composition is skewed to polar residues. A helical membrane pass occupies residues 1066–1086 (FLLFLMFLVTVYHYDLMIGLA).

As to quaternary structure, interacts with PPP1CC catalytic subunit of PP1, and associates with glycogen. Phosphorylation at Ser-48 by ISPK stimulates the dephosphorylation of glycogen synthase and phosphorylase kinase. As to expression, skeletal muscle, diaphragm and cardiac muscle.

The protein resides in the membrane. Functionally, seems to act as a glycogen-targeting subunit for PP1. PP1 is essential for cell division, and participates in the regulation of glycogen metabolism, muscle contractility and protein synthesis. Plays an important role in glycogen synthesis but is not essential for insulin activation of glycogen synthase. This Oryctolagus cuniculus (Rabbit) protein is Protein phosphatase 1 regulatory subunit 3A (PPP1R3A).